A 527-amino-acid chain; its full sequence is Rhamnogalacturonate lyase A (527 aa).

Positions 1–19 are cleaved as a signal peptide; that stretch reads MLKASLLSFVAFTAQVAHA. Intrachain disulfides connect Cys-49–Cys-92 and Cys-183–Cys-192. The N-linked (GlcNAc...) asparagine glycan is linked to Asn-350.

It belongs to the polysaccharide lyase 4 family.

The protein localises to the secreted. The enzyme catalyses Endotype eliminative cleavage of L-alpha-rhamnopyranosyl-(1-&gt;4)-alpha-D-galactopyranosyluronic acid bonds of rhamnogalacturonan I domains in ramified hairy regions of pectin leaving L-rhamnopyranose at the reducing end and 4-deoxy-4,5-unsaturated D-galactopyranosyluronic acid at the non-reducing end.. Pectinolytic enzyme that has a positive effect in the apple hot-mash liquefaction process. This endolyase hydrolyzes the alpha-L-rhamnopyranosyl-(1,4)-alpha-D-galacturonopyranosyl glycosidic linkage by beta-elimination, thereby generating oligosaccharides terminating at the non-reducing end with a hex-4-enopyranosyluronic acid residue. The sequence is that of Rhamnogalacturonate lyase A (rglA) from Aspergillus aculeatus.